Reading from the N-terminus, the 59-residue chain is Large ribosomal subunit protein bL32 (59 aa).

The protein belongs to the bacterial ribosomal protein bL32 family.

In Rhizorhabdus wittichii (strain DSM 6014 / CCUG 31198 / JCM 15750 / NBRC 105917 / EY 4224 / RW1) (Sphingomonas wittichii), this protein is Large ribosomal subunit protein bL32.